The primary structure comprises 407 residues: Peptidase T (407 aa).

His82 contributes to the Zn(2+) binding site. Asp84 is an active-site residue. Asp143 contributes to the Zn(2+) binding site. Residue Glu177 is the Proton acceptor of the active site. Glu178, Asp200, and His382 together coordinate Zn(2+).

This sequence belongs to the peptidase M20B family. Requires Zn(2+) as cofactor.

It is found in the cytoplasm. It catalyses the reaction Release of the N-terminal residue from a tripeptide.. Functionally, cleaves the N-terminal amino acid of tripeptides. In Streptococcus pyogenes serotype M1, this protein is Peptidase T.